The sequence spans 1038 residues: Elongation factor 3 (1038 aa).

HEAT repeat units lie at residues 93-131 (EAYLLPLLSVFLDLLGDKKPTVRPVAQEAALTIISSANK), 133-170 (STIRILPILFDGLDRSKKWQTKKGALDLIAELSKVAPY), 174-211 (RCLPDIIPQVTDCMWDTRKEVKVAARDTMTKVCNVVGN), 213-249 (DIEPFIPALVSCLANPTEVPECTHKLASTTFVKTVEA), 255-287 (MEPLLKRALAEGKTAVKRQAAVIIDNMCKLMDD), and 292-331 (QLFIPKLLPGLKKVIETQADPECREVATRAHETLFVAGGS). Position 406 (Glu406) interacts with ADP. 2 ABC transporter domains span residues 426–654 (IFIE…YYEL) and 680–995 (IRLT…EEVT). Residues Asn716, Glu924, Asn927, and His953 each contribute to the ADP site. A disordered region spans residues 1012–1038 (RKEKKAKDKARKEAEARGEYYSDSDEE). Residues 1021–1031 (ARKEAEARGEY) show a composition bias toward basic and acidic residues.

The protein belongs to the ABC transporter superfamily. ABCF family. EF3 subfamily. Monomer.

It localises to the cytoplasm. The enzyme catalyses ATP + H2O = ADP + phosphate + H(+). Its pathway is protein biosynthesis; polypeptide chain elongation. Functionally, ribosome-dependent ATPase that functions in cytoplasmic translation elongation. Required for the ATP-dependent release of deacylated tRNA from the ribosomal E-site during protein biosynthesis. Stimulates the eEF1A-dependent binding of aminoacyl-tRNA to the ribosomal A-site, which has reduced affinity for tRNA as long as the E-site is occupied. Assists translation termination by stimulating the release of nascent protein from the ribosome by release factors. This is Elongation factor 3 from Phytophthora infestans (strain T30-4) (Potato late blight agent).